We begin with the raw amino-acid sequence, 431 residues long: Argininosuccinate lyase (431 aa).

This sequence belongs to the lyase 1 family. Argininosuccinate lyase subfamily.

It is found in the cytoplasm. The catalysed reaction is 2-(N(omega)-L-arginino)succinate = fumarate + L-arginine. It functions in the pathway amino-acid biosynthesis; L-arginine biosynthesis; L-arginine from L-ornithine and carbamoyl phosphate: step 3/3. The chain is Argininosuccinate lyase from Xanthomonas campestris pv. campestris (strain ATCC 33913 / DSM 3586 / NCPPB 528 / LMG 568 / P 25).